Reading from the N-terminus, the 267-residue chain is tRNA-cytidine(32) 2-sulfurtransferase 2 (267 aa).

A PP-loop motif motif is present at residues 42–47 (SGGKDS). 3 residues coordinate [4Fe-4S] cluster: Cys117, Cys120, and Cys208.

It belongs to the TtcA family. In terms of assembly, homodimer. The cofactor is Mg(2+). It depends on [4Fe-4S] cluster as a cofactor.

It localises to the cytoplasm. It carries out the reaction cytidine(32) in tRNA + S-sulfanyl-L-cysteinyl-[cysteine desulfurase] + AH2 + ATP = 2-thiocytidine(32) in tRNA + L-cysteinyl-[cysteine desulfurase] + A + AMP + diphosphate + H(+). It participates in tRNA modification. Catalyzes the ATP-dependent 2-thiolation of cytidine in position 32 of tRNA, to form 2-thiocytidine (s(2)C32). The sulfur atoms are provided by the cysteine/cysteine desulfurase (IscS) system. The polypeptide is tRNA-cytidine(32) 2-sulfurtransferase 2 (Francisella tularensis subsp. holarctica (strain FTNF002-00 / FTA)).